The following is a 201-amino-acid chain: Elongation factor Ts (201 aa).

The interval 81-84 (TDFV) is involved in Mg(2+) ion dislocation from EF-Tu.

Belongs to the EF-Ts family.

The protein resides in the cytoplasm. Functionally, associates with the EF-Tu.GDP complex and induces the exchange of GDP to GTP. It remains bound to the aminoacyl-tRNA.EF-Tu.GTP complex up to the GTP hydrolysis stage on the ribosome. This chain is Elongation factor Ts, found in Syntrophus aciditrophicus (strain SB).